The following is a 108-amino-acid chain: Nucleoid-associated protein HCH_02614 (108 aa).

Belongs to the YbaB/EbfC family. Homodimer.

The protein resides in the cytoplasm. It is found in the nucleoid. Its function is as follows. Binds to DNA and alters its conformation. May be involved in regulation of gene expression, nucleoid organization and DNA protection. In Hahella chejuensis (strain KCTC 2396), this protein is Nucleoid-associated protein HCH_02614.